Consider the following 947-residue polypeptide: Ionotropic receptor 25a (947 aa).

An N-terminal signal peptide occupies residues 1 to 30; that stretch reads MILMNPKTSKILWLLGFLSLLSSFSLEIAA. At 31 to 562 the chain is on the extracellular side; it reads QTTQNINVLF…SLFKFLTVLE (532 aa). N-linked (GlcNAc...) asparagine glycosylation is found at N78, N177, N277, and N434. The helical transmembrane segment at 563–583 threads the bilayer; it reads TNVWLCILAAYFFTSFLMWIF. Topologically, residues 584 to 641 are cytoplasmic; that stretch reads DRWSPYSYQNNREKYKDDEEKREFNLKECLWFCMTSLTPQGGGEAPKNLSGRLVAATW. Residues 642–662 form a helical membrane-spanning segment; the sequence is WLFGFIIIASYTANLAAFLTV. At 663–858 the chain is on the extracellular side; that stretch reads SRLDTPVESL…DQSDGISIQN (196 aa). N687, N715, and N762 each carry an N-linked (GlcNAc...) asparagine glycan. The chain crosses the membrane as a helical span at residues 859–879; that stretch reads IGGVFIVIFVGIGMACITLVF. Residues 880–947 lie on the Cytoplasmic side of the membrane; the sequence is EYWWYRYRKN…QYPATFKPRF (68 aa).

This sequence belongs to the glutamate-gated ion channel (TC 1.A.10.1) family. Interacts with nocte. As to expression, in the antenna, detected in neurons of the arista and also detected in sacculus neurons which innervate the first and second chambers (at protein level). Throughout the main body of the antenna, expressed in neurons which innervate the coeloconic class of olfactory sensilla (at protein level). Expressed in multiple cells of the dorsal organ including the dorsal organ cool cells (at protein level). Detected in femur and retina. Expressed in a subset of femur chordonotal neurons and antennal Johnston's Organ neurons.

The protein resides in the cell membrane. It localises to the cell projection. It is found in the axon. Its subcellular location is the dendrite. The protein localises to the perikaryon. The protein resides in the cilium. In terms of biological role, integral part of various neural sensory systems in the antenna that provide the neural basis for the response to environmental changes in temperature (thermosensation), humidity (hygrosensation) and odor detection. Required for odor-evoked electrophysiological responses in multiple neuron classes in the antenna and is likely to function as part of an olfactory receptor complex with Ir76a and Ir76b. Together with Ir21a and Ir93a, mediates the response of the larval dorsal organ cool cells, a trio of cool-responsive neurons, to cooling and is required for cool avoidance behavior. Required in chordonotal organ neurons for behavioral synchronization to low-amplitude temperature cycles and mediates circadian clock resetting by temperature. Together with Ir40a and Ir93a, mediates the response of the hydrosensory sacculus neurons to changes in relative humidity, and is required for dry detection and humidiy preference behavior. This chain is Ionotropic receptor 25a, found in Drosophila melanogaster (Fruit fly).